Reading from the N-terminus, the 336-residue chain is MEDAVRKLLNSADHEVLALANDARAIEQLKVRFLGRKGELARLFKEMGKVPEAERPAVGKVLNEAKVRLEALFAEALERGGEQGAGRREQIDITVPGRRPPRGRLHPISQVAREVCRIFNWLGFEIVEGPEVELDYYNFEALNIPRDHPARDMQDTFYVSDDVVLRTHTSPLQVRTMEKRRPPIRVIAPGKTYRCDSDVTHTPMFHQVEGLMVGKDISFGDLKGILTIFVHQMFGADVGLRFRPSFFPFTEPSAEVDIQCVMCKGEGCRVCSQTGWLEILGSGMVDPEVFRMVGYDPEEVTGFAFGMGIERITMLKYGIDDLRLFFENDFRFLRQF.

Glu251 is a Mg(2+) binding site.

This sequence belongs to the class-II aminoacyl-tRNA synthetase family. Phe-tRNA synthetase alpha subunit type 1 subfamily. Tetramer of two alpha and two beta subunits. The cofactor is Mg(2+).

It is found in the cytoplasm. It catalyses the reaction tRNA(Phe) + L-phenylalanine + ATP = L-phenylalanyl-tRNA(Phe) + AMP + diphosphate + H(+). The chain is Phenylalanine--tRNA ligase alpha subunit from Syntrophobacter fumaroxidans (strain DSM 10017 / MPOB).